A 1536-amino-acid chain; its full sequence is Ferredoxin-dependent glutamate synthase (1536 aa).

The active-site For GATase activity is Cys-27. Residues 27–427 (CGVGFIANLN…PGQMLCVDLS (401 aa)) form the Glutamine amidotransferase type-2 domain. 1105-1162 (LAEVHTTLVENSLREKVILRVDGGLRTGKDIIIAALMGAEEFGFGTVAMIATGCVMAR) provides a ligand contact to FMN. [3Fe-4S] cluster is bound by residues Cys-1158, Cys-1164, and Cys-1169.

It belongs to the glutamate synthase family. In terms of assembly, monomer. Requires [3Fe-4S] cluster as cofactor. FAD serves as cofactor. FMN is required as a cofactor.

It is found in the plastid. Its subcellular location is the chloroplast stroma. It catalyses the reaction 2 oxidized [2Fe-2S]-[ferredoxin] + 2 L-glutamate = L-glutamine + 2 reduced [2Fe-2S]-[ferredoxin] + 2-oxoglutarate + 2 H(+). Its pathway is amino-acid biosynthesis; L-glutamate biosynthesis via GLT pathway; L-glutamate from 2-oxoglutarate and L-glutamine (ferredoxin route): step 1/1. It participates in energy metabolism; nitrogen metabolism. In Antithamnion sp. (Red alga), this protein is Ferredoxin-dependent glutamate synthase (gltB).